We begin with the raw amino-acid sequence, 256 residues long: 5-keto-4-deoxy-D-glucarate aldolase (256 aa).

The active-site Proton acceptor is H50. Position 151 (Q151) interacts with substrate. Residue E153 participates in Mg(2+) binding. Residues S178 and D179 each coordinate substrate. Position 179 (D179) interacts with Mg(2+).

The protein belongs to the HpcH/HpaI aldolase family. KDGluc aldolase subfamily. As to quaternary structure, homohexamer; trimer of dimers. Mg(2+) serves as cofactor.

The catalysed reaction is 5-dehydro-4-deoxy-D-glucarate = 2-hydroxy-3-oxopropanoate + pyruvate. The enzyme catalyses 2-dehydro-3-deoxy-D-glucarate = 2-hydroxy-3-oxopropanoate + pyruvate. It participates in carbohydrate acid metabolism; galactarate degradation; D-glycerate from galactarate: step 2/3. Catalyzes the reversible retro-aldol cleavage of both 5-keto-4-deoxy-D-glucarate and 2-keto-3-deoxy-D-glucarate to pyruvate and tartronic semialdehyde. This chain is 5-keto-4-deoxy-D-glucarate aldolase, found in Salmonella agona (strain SL483).